A 231-amino-acid chain; its full sequence is 7-cyano-7-deazaguanine synthase (231 aa).

8-18 (FSGGQDSTTCL) lines the ATP pocket. Zn(2+)-binding residues include C188, C197, C200, and C203.

Belongs to the QueC family. Requires Zn(2+) as cofactor.

The enzyme catalyses 7-carboxy-7-deazaguanine + NH4(+) + ATP = 7-cyano-7-deazaguanine + ADP + phosphate + H2O + H(+). The protein operates within purine metabolism; 7-cyano-7-deazaguanine biosynthesis. Catalyzes the ATP-dependent conversion of 7-carboxy-7-deazaguanine (CDG) to 7-cyano-7-deazaguanine (preQ(0)). The chain is 7-cyano-7-deazaguanine synthase from Pectobacterium carotovorum subsp. carotovorum (strain PC1).